A 256-amino-acid chain; its full sequence is Eukaryotic translation initiation factor 3 subunit J (256 aa).

The tract at residues 1–67 is sufficient for interaction with EIF3B; that stretch reads MAAAAAGDSD…KEEAEVKPEV (67 aa). Residues 1-106 form a disordered region; sequence MAAAAAGDSD…LEEPEEPKVL (106 aa). Phosphoserine is present on residues Ser9, Ser11, and Ser18. A compositionally biased stretch (acidic residues) spans 38–57; it reads EGEDEDEDVKDNWDDDDDEK. Positions 58 to 104 are enriched in basic and acidic residues; that stretch reads KEEAEVKPEVKISEKKKIAEKIKEKERQQKKRQEEIKKRLEEPEEPK. The stretch at 68–133 forms a coiled coil; sequence KISEKKKIAE…ESDLELAKET (66 aa). Residue Lys104 forms a Glycyl lysine isopeptide (Lys-Gly) (interchain with G-Cter in SUMO2) linkage. Thr107 carries the phosphothreonine modification. Ser125 is subject to Phosphoserine. The segment at 214 to 243 is disordered; that stretch reads QSKAKKKKKGVVPGGGLKATMKDDLADYGG. The segment at 241 to 256 is promotes stable association with the 40S ribosome; it reads YGGYDGGYAQDYEDFM. A Phosphotyrosine modification is found at Tyr252.

Belongs to the eIF-3 subunit J family. In terms of assembly, component of the eukaryotic translation initiation factor 3 (eIF-3) complex, which is composed of 13 subunits: EIF3A, EIF3B, EIF3C, EIF3D, EIF3E, EIF3F, EIF3G, EIF3H, EIF3I, EIF3J, EIF3K, EIF3L and EIF3M. The eIF-3 complex appears to include 3 stable modules: module A is composed of EIF3A, EIF3B, EIF3G and EIF3I; module B is composed of EIF3F, EIF3H, and EIF3M; and module C is composed of EIF3C, EIF3D, EIF3E, EIF3K and EIF3L. EIF3C of module C binds EIF3B of module A and EIF3H of module B, thereby linking the three modules. EIF3J is a labile subunit that binds to the eIF-3 complex via EIF3B. The eIF-3 complex interacts with RPS6KB1 under conditions of nutrient depletion. Mitogenic stimulation leads to binding and activation of a complex composed of MTOR and RPTOR, leading to phosphorylation and release of RPS6KB1 and binding of EIF4B to eIF-3. Phosphorylated. Phosphorylation is enhanced upon serum stimulation.

It localises to the cytoplasm. In terms of biological role, component of the eukaryotic translation initiation factor 3 (eIF-3) complex, which is required for several steps in the initiation of protein synthesis. The eIF-3 complex associates with the 40S ribosome and facilitates the recruitment of eIF-1, eIF-1A, eIF-2:GTP:methionyl-tRNAi and eIF-5 to form the 43S pre-initiation complex (43S PIC). The eIF-3 complex stimulates mRNA recruitment to the 43S PIC and scanning of the mRNA for AUG recognition. The eIF-3 complex is also required for disassembly and recycling of post-termination ribosomal complexes and subsequently prevents premature joining of the 40S and 60S ribosomal subunits prior to initiation. The eIF-3 complex specifically targets and initiates translation of a subset of mRNAs involved in cell proliferation, including cell cycling, differentiation and apoptosis, and uses different modes of RNA stem-loop binding to exert either translational activation or repression. This subunit binds directly within the mRNA entry channel of the 40S ribosome to the aminoacyl (A) site. It may regulate the interaction between the 43S PIC and mRNA. The chain is Eukaryotic translation initiation factor 3 subunit J from Bos taurus (Bovine).